Consider the following 161-residue polypeptide: Nucleotide-binding protein SO_3815 (161 aa).

It belongs to the YajQ family.

Functionally, nucleotide-binding protein. The chain is Nucleotide-binding protein SO_3815 from Shewanella oneidensis (strain ATCC 700550 / JCM 31522 / CIP 106686 / LMG 19005 / NCIMB 14063 / MR-1).